The primary structure comprises 479 residues: UDP-N-acetylmuramate--L-alanine ligase (479 aa).

128–134 (GAHGKTT) contacts ATP.

This sequence belongs to the MurCDEF family.

The protein localises to the cytoplasm. The enzyme catalyses UDP-N-acetyl-alpha-D-muramate + L-alanine + ATP = UDP-N-acetyl-alpha-D-muramoyl-L-alanine + ADP + phosphate + H(+). It participates in cell wall biogenesis; peptidoglycan biosynthesis. Cell wall formation. The sequence is that of UDP-N-acetylmuramate--L-alanine ligase from Psychrobacter arcticus (strain DSM 17307 / VKM B-2377 / 273-4).